Reading from the N-terminus, the 151-residue chain is Deoxyuridine 5'-triphosphate nucleotidohydrolase (151 aa).

Residues 70 to 72, N83, 87 to 89, and M97 contribute to the substrate site; these read RSG and LID.

The protein belongs to the dUTPase family. Mg(2+) serves as cofactor.

It catalyses the reaction dUTP + H2O = dUMP + diphosphate + H(+). It participates in pyrimidine metabolism; dUMP biosynthesis; dUMP from dCTP (dUTP route): step 2/2. In terms of biological role, this enzyme is involved in nucleotide metabolism: it produces dUMP, the immediate precursor of thymidine nucleotides and it decreases the intracellular concentration of dUTP so that uracil cannot be incorporated into DNA. This is Deoxyuridine 5'-triphosphate nucleotidohydrolase from Pseudomonas syringae pv. syringae (strain B728a).